The primary structure comprises 362 residues: Adenosine deaminase (362 aa).

2 residues coordinate Zn(2+): His41 and His43. His43–Asp45 provides a ligand contact to a purine D-ribonucleoside. The gating helix loop; regulates binding affinity for substrates and thus substrate selectivity stretch occupies residues Ile169–Ala183. An a purine D-ribonucleoside-binding site is contributed by Gly200. His225 contacts Zn(2+). A purine D-ribonucleoside-binding residues include Glu228, His252, and Asp309. A Zn(2+)-binding site is contributed by Asp309.

Belongs to the metallo-dependent hydrolases superfamily. Adenosine and AMP deaminases family. It depends on Zn(2+) as a cofactor.

It catalyses the reaction adenosine + H2O + H(+) = inosine + NH4(+). It participates in purine metabolism; purine nucleoside salvage. With respect to regulation, inhibited by coformycin but not by methylthiocoformycin (MT-coformycin). Functionally, catalyzes the hydrolytic deamination of adenosine to produce inosine. Unlike other Plasmodium adenosine deaminases, does not catalyze the deamination of 5'-methylthioadenosine (MTA). Plays an essential role in the purine salvage pathway which allows the parasite to use host cell purines for the synthesis of nucleic acids. This Plasmodium gallinaceum protein is Adenosine deaminase.